The primary structure comprises 282 residues: MAKLCCFGSSDYDLVVGRASTSSGKGRNNDGEIKFGYSLVKGKANHPMEDYHVSKFVKIDGNELGLFAIYDGHLGERVPAYLQKHLFSNILKEEQFRYDPQRSIIAAYEKTDQAILSHSSDLGRGGSTAVTAILMNGRRLWVANVGDSRAVLSQGGQAIQMTIDHEPHTERLSIEGKGGFVSNMPGDVPRVNGQLAVSRAFGDKSLKTHLRSDPDVKDSSIDDHTDVLVLASDGLWKVMANQEAIDIARRIKDPLKAAKELTTEALRRDSKDDISCIVVRLR.

The 248-residue stretch at 34–281 folds into the PPM-type phosphatase domain; it reads KFGYSLVKGK…DDISCIVVRL (248 aa). Mn(2+) contacts are provided by aspartate 71, glycine 72, aspartate 233, and aspartate 272.

This sequence belongs to the PP2C family. Mg(2+) is required as a cofactor. It depends on Mn(2+) as a cofactor.

It catalyses the reaction O-phospho-L-seryl-[protein] + H2O = L-seryl-[protein] + phosphate. The catalysed reaction is O-phospho-L-threonyl-[protein] + H2O = L-threonyl-[protein] + phosphate. This chain is Probable protein phosphatase 2C 10, found in Arabidopsis thaliana (Mouse-ear cress).